The primary structure comprises 209 residues: Orotate phosphoribosyltransferase (209 aa).

Residues arginine 96, lysine 100, histidine 102, and 122-130 (EDLISTGGS) contribute to the 5-phospho-alpha-D-ribose 1-diphosphate site. Residue serine 126 coordinates orotate.

Belongs to the purine/pyrimidine phosphoribosyltransferase family. PyrE subfamily. Homodimer. The cofactor is Mg(2+).

It carries out the reaction orotidine 5'-phosphate + diphosphate = orotate + 5-phospho-alpha-D-ribose 1-diphosphate. The protein operates within pyrimidine metabolism; UMP biosynthesis via de novo pathway; UMP from orotate: step 1/2. Its function is as follows. Catalyzes the transfer of a ribosyl phosphate group from 5-phosphoribose 1-diphosphate to orotate, leading to the formation of orotidine monophosphate (OMP). The polypeptide is Orotate phosphoribosyltransferase (Streptococcus pyogenes serotype M2 (strain MGAS10270)).